A 123-amino-acid chain; its full sequence is Plasminogen (123 aa).

Positions Asp-40–Cys-118 constitute a Kringle domain. Cystine bridges form between Cys-41-Cys-118, Cys-62-Cys-101, and Cys-90-Cys-113.

This sequence belongs to the peptidase S1 family. Plasminogen subfamily. As to quaternary structure, interacts with CSPG4 and AMOT. Interacts (via the Kringle domains) with HRG; the interaction tethers PLG to the cell surface and enhances its activation. Interacts (via Kringle 4 domain) with ADA; the interaction stimulates PLG activation when in complex with DPP4. Angiostatin: Interacts with ATP5F1A; the interaction inhibits most of the angiogenic effects of angiostatin.

It localises to the secreted. The catalysed reaction is Preferential cleavage: Lys-|-Xaa &gt; Arg-|-Xaa, higher selectivity than trypsin. Converts fibrin into soluble products.. With respect to regulation, converted into plasmin by plasminogen activators, both plasminogen and its activator being bound to fibrin. Cannot be activated with streptokinase. Its function is as follows. Plasmin dissolves the fibrin of blood clots and acts as a proteolytic factor in a variety of other processes including embryonic development, tissue remodeling, tumor invasion, and inflammation. In ovulation, weakens the walls of the Graafian follicle. It activates the urokinase-type plasminogen activator, collagenases and several complement zymogens, such as C1, C4 and C5. Cleavage of fibronectin and laminin leads to cell detachment and apoptosis. Also cleaves fibrin, thrombospondin and von Willebrand factor. Its role in tissue remodeling and tumor invasion may be modulated by CSPG4. Binds to cells. The sequence is that of Plasminogen (PLG) from Capra hircus (Goat).